A 1203-amino-acid chain; its full sequence is Exonuclease/helicase subunit RexA (1203 aa).

Residues 4–472 form the UvrD-like helicase ATP-binding domain; it reads VKLTPEQNEA…IRLKENFRSR (469 aa). ATP is bound at residue 25 to 32; it reads ASAGSGKT. Residues 503–785 form the UvrD-like helicase C-terminal domain; sequence VQGNISDYPV…RVMTFHKSKG (283 aa).

The protein belongs to the helicase family. AddA subfamily. As to quaternary structure, heterodimer of RexA (AddA) and RexB. Mg(2+) is required as a cofactor.

It catalyses the reaction Couples ATP hydrolysis with the unwinding of duplex DNA by translocating in the 3'-5' direction.. The enzyme catalyses ATP + H2O = ADP + phosphate + H(+). In terms of biological role, the heterodimer acts both as an ATP-dependent DNA helicase and an ATP-dependent, dual-direction single-stranded exonuclease. Recognizes the L.lactis chi site (5'-GCGCGTG-3'), which stimulates homologous recombination. The RexA (AddA) nuclease domain is required for chi fragment generation; this subunit has 3'-&gt;5' exonuclease activity and probably also performs the helicase function. This is Exonuclease/helicase subunit RexA from Lactococcus lactis subsp. cremoris (strain MG1363).